The primary structure comprises 229 residues: Putative ABC transporter permease protein ORF1 (229 aa).

Residues 23–214 (ALNSLLVALA…LPSLAFFALV (192 aa)) form the ABC transmembrane type-1 domain. Transmembrane regions (helical) follow at residues 27–47 (LLVALATAAVTVLIATPMAYV), 62–82 (WVVVSQAFPFVLLIIPLFLVL), 91–111 (LTGLVLVYVVWSLPFALWMLA), 150–170 (ATALFAFVTAWNEFFFALVLL), and 194–214 (SPAGAAAFLATLPSLAFFALV).

Belongs to the binding-protein-dependent transport system permease family. MalFG subfamily.

Its subcellular location is the cell membrane. In terms of biological role, may participate in oleandomycin secretion during antibiotic production. This Streptomyces antibioticus protein is Putative ABC transporter permease protein ORF1.